Here is a 302-residue protein sequence, read N- to C-terminus: Urease accessory protein UreG (302 aa).

3 stretches are compositionally biased toward basic and acidic residues: residues 1–32 (MHDP…DHVH), 40–56 (HEHE…EHGH), and 64–76 (HAHE…THEH). A disordered region spans residues 1-76 (MHDPGEHGHG…EHAHGHTHEH (76 aa)). Residue 105-112 (GPVGSGKT) coordinates GTP.

This sequence belongs to the SIMIBI class G3E GTPase family. UreG subfamily. In terms of assembly, homodimer. UreD, UreF and UreG form a complex that acts as a GTP-hydrolysis-dependent molecular chaperone, activating the urease apoprotein by helping to assemble the nickel containing metallocenter of UreC. The UreE protein probably delivers the nickel.

It localises to the cytoplasm. Facilitates the functional incorporation of the urease nickel metallocenter. This process requires GTP hydrolysis, probably effectuated by UreG. This Sorangium cellulosum (strain So ce56) (Polyangium cellulosum (strain So ce56)) protein is Urease accessory protein UreG.